A 294-amino-acid polypeptide reads, in one-letter code: Early 4 ORF6 protein (294 aa).

Positions 239–255 match the Nuclear localization signal motif; that stretch reads ARRTRRLMLRAVRIIAE.

Belongs to the adenoviridae E4 30 to 34 kDa protein family. In terms of assembly, interacts with E1B-55k.

It is found in the host nucleus. Its subcellular location is the host cytoplasm. Functionally, plays a major role to prevent cellular inhibition of viral genome replication by nuclear bodies. Assembles an SCF-like E3 ubiquitin ligase complex based on the cellular proteins ELOB, ELOC, CUL5 and RBX1, in cooperation with viral E1B-55K. This viral RING-type ligase ubiquitinates cellular substrates prior to proteasomal degradation: p53/TP53, LIG4, MRE11-RAD50-NBS1 (MRN) complex, ITGA3, DAXX and BLM. The sequence is that of Early 4 ORF6 protein from Homo sapiens (Human).